The primary structure comprises 240 residues: MGRAFEVRKAAMAKTAGAKTKVYSKYGKEIYVCAKNGGADPDTNLSLRRLMEKAKKDQVPSHVIEKAIDKAAGGAGEDFQPMRYEGFGPGNCMVIVDCLSDNANRTITEVRNCFTKTNAKLGAQGAVSHMFDHQAVFQFEGDDEDAILEVLMEADVDVTDVEVEDGKVTVYAPHTEFYQVRTALTEAYPDLSFIADEISWMPQTETEISEEDMPMFEKFMDMLNDCDDVQDVYHNAVTPS.

It belongs to the TACO1 family.

The protein localises to the cytoplasm. The protein is Probable transcriptional regulatory protein MADE_1004275 of Alteromonas mediterranea (strain DSM 17117 / CIP 110805 / LMG 28347 / Deep ecotype).